We begin with the raw amino-acid sequence, 80 residues long: Regulatory protein HrpD6 (80 aa).

Functionally, involved in the regulation of several genes of the hrp-hrc-hpa cluster, which encodes a type III secretion system (T3SS). Upregulates the expression of hpa2, hpa1 and hpaB and partially controls the expression of hrcC and hrcT. Controls the secretion of the T3SS TAL effector AvrXa27. Also regulates the expression of several HrpX-regulated protein (Xrp) genes. Has no influence on hrpG or hrpX expression. In Xanthomonas oryzae pv. oryzicola, this protein is Regulatory protein HrpD6.